Here is a 166-residue protein sequence, read N- to C-terminus: Lithostathine-1-beta (166 aa).

The N-terminal stretch at methionine 1–glycine 22 is a signal peptide. O-linked (GalNAc...) threonine glycosylation is present at threonine 27. In terms of domain architecture, C-type lectin spans isoleucine 34–phenylalanine 164. Intrachain disulfides connect cysteine 36-cysteine 47, cysteine 64-cysteine 162, and cysteine 137-cysteine 154.

In terms of processing, all O-linked glycans consist of Gal-GlcNAc-Gal-GalNAc tetrasaccharide core and get elongated (microheterogeneity).

It is found in the secreted. Its function is as follows. Might act as an inhibitor of spontaneous calcium carbonate precipitation. May be associated with neuronal sprouting in brain, and with brain and pancreas regeneration. This chain is Lithostathine-1-beta (REG1B), found in Homo sapiens (Human).